A 421-amino-acid chain; its full sequence is MSQNKAFSTPFILAVLCIYFSYFLHGISVITLAQNMSSLAEKFSTDNAGIAYLISGIGLGRLISILFFGVISDKFGRRAVILMAVIMYLLFFFGIPACPNLTLAYGLAVCVGIANSALDTGGYPALMECFPKASGSAVILVKAMVSFGQMFYPMLVSYMLLNNIWYGYGLIIPGILFVLITLMLLKSKFPSQLVDASVTNELPQMNSKPLVWLEGVSSVLFGVAAFSTFYVIVVWMPKYAMAFAGMSEAEALKTISYYSMGSLVCVFIFAALLKKMVRPIWANVFNSALATITAAIIYLYPSPLVCNAGAFVIGFSAAGGILQLGVSVMSEFFPKSKAKVTSIYMMMGGLANFVIPLITGYLSNIGLQYIIVLDFTFALLALITAIIVFIRYYRVFIIPENDVRFGERKFCTRLNTIKHRG.

Residues 1–9 (MSQNKAFST) are Cytoplasmic-facing. Residues 10-30 (PFILAVLCIYFSYFLHGISVI) traverse the membrane as a helical segment. The Periplasmic segment spans residues 31-49 (TLAQNMSSLAEKFSTDNAG). Residues 50–70 (IAYLISGIGLGRLISILFFGV) traverse the membrane as a helical segment. Topologically, residues 71–78 (ISDKFGRR) are cytoplasmic. A helical transmembrane segment spans residues 79 to 99 (AVILMAVIMYLLFFFGIPACP). Position 100 (asparagine 100) is a topological domain, periplasmic. Residues 101–121 (LTLAYGLAVCVGIANSALDTG) traverse the membrane as a helical segment. Residues 122-136 (GYPALMECFPKASGS) are Cytoplasmic-facing. A helical membrane pass occupies residues 137–157 (AVILVKAMVSFGQMFYPMLVS). Over 158–163 (YMLLNN) the chain is Periplasmic. Residues 164-184 (IWYGYGLIIPGILFVLITLML) form a helical membrane-spanning segment. The Cytoplasmic segment spans residues 185–215 (LKSKFPSQLVDASVTNELPQMNSKPLVWLEG). The chain crosses the membrane as a helical span at residues 216-236 (VSSVLFGVAAFSTFYVIVVWM). Residues 237-251 (PKYAMAFAGMSEAEA) are Periplasmic-facing. Residues 252-272 (LKTISYYSMGSLVCVFIFAAL) form a helical membrane-spanning segment. The Cytoplasmic segment spans residues 273–279 (LKKMVRP). The chain crosses the membrane as a helical span at residues 280–300 (IWANVFNSALATITAAIIYLY). Residues 301–308 (PSPLVCNA) are Periplasmic-facing. The chain crosses the membrane as a helical span at residues 309–329 (GAFVIGFSAAGGILQLGVSVM). The Cytoplasmic segment spans residues 330–342 (SEFFPKSKAKVTS). The helical transmembrane segment at 343 to 363 (IYMMMGGLANFVIPLITGYLS) threads the bilayer. At 364 to 369 (NIGLQY) the chain is on the periplasmic side. Residues 370–390 (IIVLDFTFALLALITAIIVFI) form a helical membrane-spanning segment. The Cytoplasmic segment spans residues 391–421 (RYYRVFIIPENDVRFGERKFCTRLNTIKHRG).

The protein belongs to the major facilitator superfamily.

Its subcellular location is the cell inner membrane. This chain is Inner membrane transport protein YdiN (ydiN), found in Escherichia coli (strain K12).